A 216-amino-acid polypeptide reads, in one-letter code: Adenylate kinase (216 aa).

11–16 (GSGKGT) contacts ATP. The NMP stretch occupies residues 31 to 60 (ATGDLFRKAIECGDELGDTVKSYMERGELV). Residues Thr-32, Arg-37, 58–60 (ELV), 86–89 (GFPR), and Gln-93 each bind AMP. The tract at residues 127 to 163 (GRWVCRSCQSPYQSGCAEVTKGKCSRCQGGLYQRPDD) is LID. Arg-128 is an ATP binding site. The Zn(2+) site is built by Cys-131, Cys-134, Cys-150, and Cys-153. AMP-binding residues include Arg-160 and Arg-171. An ATP-binding site is contributed by Ala-199.

The protein belongs to the adenylate kinase family. As to quaternary structure, monomer.

Its subcellular location is the cytoplasm. It carries out the reaction AMP + ATP = 2 ADP. It functions in the pathway purine metabolism; AMP biosynthesis via salvage pathway; AMP from ADP: step 1/1. Functionally, catalyzes the reversible transfer of the terminal phosphate group between ATP and AMP. Plays an important role in cellular energy homeostasis and in adenine nucleotide metabolism. The sequence is that of Adenylate kinase from Dehalococcoides mccartyi (strain CBDB1).